Consider the following 138-residue polypeptide: HTH-type transcriptional regulator CymR (138 aa).

The region spanning Lys2 to Ser125 is the HTH rrf2-type domain. Residues Leu28–Asn51 constitute a DNA-binding region (H-T-H motif).

In terms of assembly, homodimer. Forms homotetramers at higher concentrations of protein. Forms CymR(2):CysK(2) or CymR(4):CysK(4) complexes in the absence of O-acetylserine.

Functionally, master repressor of cysteine metabolism in B.subtilis. Controls the expression of genes involved either in cysteine synthesis from sulfide (cysK), sulfonates (ssu), or methionine (mccAB) or in cystine uptake (tcyP). Activity of CymR is positively regulated by CysK in response to cysteine availability. When cysteine is present, the pool of O-acetylserine (OAS) is low, which leads to the formation of a CymR-CysK complex and transcriptional repression of the CymR regulon occurs. In the absence of cysteine, the OAS pool is high and the CymR-CysK complex is mostly dissociated, leading to a faster dissociation of CymR from its DNA targets and the lifting of CymR-dependent repression. The polypeptide is HTH-type transcriptional regulator CymR (cymR) (Bacillus subtilis (strain 168)).